Reading from the N-terminus, the 234-residue chain is Chalcone--flavanone isomerase 2 (234 aa).

Substrate is bound by residues T50, N115, and S192.

It belongs to the chalcone isomerase family.

The enzyme catalyses a chalcone = a flavanone.. It participates in secondary metabolite biosynthesis; flavonoid biosynthesis. In terms of biological role, catalyzes the intramolecular cyclization of bicyclic chalcones into tricyclic (S)-flavanones. Responsible for the isomerization of 4,2',4',6'-tetrahydroxychalcone (also termed chalcone) into naringenin. The sequence is that of Chalcone--flavanone isomerase 2 (CHI2) from Vitis vinifera (Grape).